The sequence spans 360 residues: Magnesium transporter NIPA2 (360 aa).

Over 1–9 (MSQGHGKYD) the chain is Extracellular. A helical transmembrane segment spans residues 10-30 (FYIGLGLAMSSSIFIGGSFIL). Over 31–56 (KKKGLLRLARKGSTRAGQGGHAYLKE) the chain is Cytoplasmic. A helical membrane pass occupies residues 57-77 (WLWWAGLLSMGAGEVANFAAY). Residue alanine 78 is a topological domain, extracellular. A helical membrane pass occupies residues 79–99 (FAPATLVTPLGALSVLVSAIL). The Cytoplasmic portion of the chain corresponds to 100 to 107 (SSYFLNER). The chain crosses the membrane as a helical span at residues 108-128 (LNLHGKIGCLLSILGSTVMVI). The Extracellular segment spans residues 129–149 (HAPKEEEIETLNEMSHKLGDP). A helical transmembrane segment spans residues 150–170 (GFVVFATLVVIVSLILIFVVG). At 171–175 (PRHGQ) the chain is on the cytoplasmic side. A helical membrane pass occupies residues 176–196 (TNILVYITICSVIGAVSVSCA). Over 197–215 (KGLGIAIKELFAGKPVLQH) the chain is Extracellular. Residues 216 to 236 (PLTWILLLSLIVCVSTQINYL) form a helical membrane-spanning segment. The Cytoplasmic segment spans residues 237-246 (NRALDIFNTS). Residues 247-267 (IVTPIYYVFFTTSVITCSAIL) traverse the membrane as a helical segment. The Extracellular portion of the chain corresponds to 268–278 (FKEWQDMPVDD). The chain crosses the membrane as a helical span at residues 279–299 (VIGTLSGFFTIIVGIFLLHAF). Topologically, residues 300–360 (KDVSFSLSSL…SRRNGNLTAF (61 aa)) are cytoplasmic.

The protein belongs to the NIPA family.

Its subcellular location is the cell membrane. It is found in the early endosome. It catalyses the reaction Mg(2+)(in) = Mg(2+)(out). In terms of biological role, acts as a selective Mg(2+) transporter. This Bos taurus (Bovine) protein is Magnesium transporter NIPA2 (NIPA2).